The sequence spans 85 residues: Cell division topological specificity factor (85 aa).

Belongs to the MinE family.

Prevents the cell division inhibition by proteins MinC and MinD at internal division sites while permitting inhibition at polar sites. This ensures cell division at the proper site by restricting the formation of a division septum at the midpoint of the long axis of the cell. The chain is Cell division topological specificity factor from Dechloromonas aromatica (strain RCB).